The primary structure comprises 279 residues: MIKKYLFPAAGYGTRFLPATKAMPKEMLPVVNKPLIQYGVEEALDAGLNEISIVTGRGKRALEDHFDISYELENQIKGTDKEKYLVGIRKLLDECSFSYTRQTQMKGLGHAILTGRPLIGDEPFAVVLADDLCVNLEGDGVLTQMVKLYQKYRCTIVAVMEVNPTETNKYGVIAGDDIGDGLIRVRDMVEKPAPEDAPSNLAIIGRYILTPDIFKLIEETEPGKGGEIQITDALLKQAKDGCVIAYKFKGQRFDCGGAEGYIEATNFCYEHFYKTGKAY.

This sequence belongs to the UDPGP type 2 family.

The enzyme catalyses alpha-D-glucose 1-phosphate + UTP + H(+) = UDP-alpha-D-glucose + diphosphate. May play a role in stationary phase survival. This chain is UTP--glucose-1-phosphate uridylyltransferase (galU), found in Pseudomonas aeruginosa.